A 446-amino-acid polypeptide reads, in one-letter code: Bifunctional protein GlmU (446 aa).

The pyrophosphorylase stretch occupies residues 1–226 (MLAVAILAAG…PDEVNGINDR (226 aa)). UDP-N-acetyl-alpha-D-glucosamine contacts are provided by residues 7–10 (LAAG), Lys-21, Gln-73, and 78–79 (GT). Asp-103 is a binding site for Mg(2+). Residues Gly-140, Glu-155, Asn-170, and Asn-224 each coordinate UDP-N-acetyl-alpha-D-glucosamine. Asn-224 serves as a coordination point for Mg(2+). The tract at residues 227-247 (CQLANCEALLQERLRNYWMKE) is linker. Residues 248–446 (GVTFTDPASC…SKQLIKNGWQ (199 aa)) form an N-acetyltransferase region. Positions 329 and 347 each coordinate UDP-N-acetyl-alpha-D-glucosamine. Residue His-359 is the Proton acceptor of the active site. Positions 362 and 373 each coordinate UDP-N-acetyl-alpha-D-glucosamine. Residues Ala-376, 382–383 (NY), Ala-419, and Arg-436 each bind acetyl-CoA.

This sequence in the N-terminal section; belongs to the N-acetylglucosamine-1-phosphate uridyltransferase family. The protein in the C-terminal section; belongs to the transferase hexapeptide repeat family. As to quaternary structure, homotrimer. Mg(2+) serves as cofactor.

The protein resides in the cytoplasm. The catalysed reaction is alpha-D-glucosamine 1-phosphate + acetyl-CoA = N-acetyl-alpha-D-glucosamine 1-phosphate + CoA + H(+). It carries out the reaction N-acetyl-alpha-D-glucosamine 1-phosphate + UTP + H(+) = UDP-N-acetyl-alpha-D-glucosamine + diphosphate. It functions in the pathway nucleotide-sugar biosynthesis; UDP-N-acetyl-alpha-D-glucosamine biosynthesis; N-acetyl-alpha-D-glucosamine 1-phosphate from alpha-D-glucosamine 6-phosphate (route II): step 2/2. It participates in nucleotide-sugar biosynthesis; UDP-N-acetyl-alpha-D-glucosamine biosynthesis; UDP-N-acetyl-alpha-D-glucosamine from N-acetyl-alpha-D-glucosamine 1-phosphate: step 1/1. Its pathway is bacterial outer membrane biogenesis; LPS lipid A biosynthesis. In terms of biological role, catalyzes the last two sequential reactions in the de novo biosynthetic pathway for UDP-N-acetylglucosamine (UDP-GlcNAc). The C-terminal domain catalyzes the transfer of acetyl group from acetyl coenzyme A to glucosamine-1-phosphate (GlcN-1-P) to produce N-acetylglucosamine-1-phosphate (GlcNAc-1-P), which is converted into UDP-GlcNAc by the transfer of uridine 5-monophosphate (from uridine 5-triphosphate), a reaction catalyzed by the N-terminal domain. The sequence is that of Bifunctional protein GlmU from Prochlorococcus marinus (strain MIT 9313).